Consider the following 155-residue polypeptide: 6,7-dimethyl-8-ribityllumazine synthase (155 aa).

5-amino-6-(D-ribitylamino)uracil-binding positions include Trp-24, 58 to 60, and 82 to 84; these read AFE and AVI. 87–88 lines the (2S)-2-hydroxy-3-oxobutyl phosphate pocket; the sequence is GT. The Proton donor role is filled by His-90. Phe-115 contacts 5-amino-6-(D-ribitylamino)uracil. Residue Arg-129 coordinates (2S)-2-hydroxy-3-oxobutyl phosphate.

Belongs to the DMRL synthase family. As to quaternary structure, forms an icosahedral capsid composed of 60 subunits, arranged as a dodecamer of pentamers.

It catalyses the reaction (2S)-2-hydroxy-3-oxobutyl phosphate + 5-amino-6-(D-ribitylamino)uracil = 6,7-dimethyl-8-(1-D-ribityl)lumazine + phosphate + 2 H2O + H(+). The protein operates within cofactor biosynthesis; riboflavin biosynthesis; riboflavin from 2-hydroxy-3-oxobutyl phosphate and 5-amino-6-(D-ribitylamino)uracil: step 1/2. Its function is as follows. Catalyzes the formation of 6,7-dimethyl-8-ribityllumazine by condensation of 5-amino-6-(D-ribitylamino)uracil with 3,4-dihydroxy-2-butanone 4-phosphate. This is the penultimate step in the biosynthesis of riboflavin. The chain is 6,7-dimethyl-8-ribityllumazine synthase from Teredinibacter turnerae (strain ATCC 39867 / T7901).